We begin with the raw amino-acid sequence, 467 residues long: Cysteine protease ATG4a (467 aa).

The interval 1 to 35 is disordered; the sequence is MKALCDRFVPQQCSSSSKSDTHDKSPLVSDSGPSD. C170 functions as the Nucleophile in the catalytic mechanism. Active-site residues include D364 and H366. Residues 448–467 are disordered; the sequence is NYGFADDDSEDEREDDWQML. The segment covering 452–467 has biased composition (acidic residues); it reads ADDDSEDEREDDWQML.

The protein belongs to the peptidase C54 family. Interacts with ATG8. Constitutively expressed.

The protein resides in the cytoplasm. The enzyme catalyses [protein]-C-terminal L-amino acid-glycyl-phosphatidylethanolamide + H2O = [protein]-C-terminal L-amino acid-glycine + a 1,2-diacyl-sn-glycero-3-phosphoethanolamine. In terms of biological role, cysteine protease that plays a key role in autophagy by mediating both proteolytic activation and delipidation of ATG8 family proteins. The protease activity is required for proteolytic activation of ATG8 family proteins: cleaves the C-terminal amino acid of ATG8 proteins to reveal a C-terminal glycine. Exposure of the glycine at the C-terminus is essential for ATG8 proteins conjugation to phosphatidylethanolamine (PE) and insertion to membranes, which is necessary for autophagy. In addition to the protease activity, also mediates delipidation of PE-conjugated ATG8 proteins. The protein is Cysteine protease ATG4a of Arabidopsis thaliana (Mouse-ear cress).